A 308-amino-acid polypeptide reads, in one-letter code: HTH-type transcriptional regulator SsuR (308 aa).

In terms of domain architecture, HTH lysR-type spans 1-59 (MNFQQLRFVREAVRQNMNLTEVANVLYTSQSGVSKQIKDLEDELGVDIFIRRGKRLTGL). The H-T-H motif DNA-binding region spans 19–38 (LTEVANVLYTSQSGVSKQIK).

It belongs to the LysR transcriptional regulatory family.

Transcriptional regulator that is essential for the utilization of a number of organic sulfur sources of either environmental or human origin. Required for aliphatic sulfonate utilization. Binds to DNA at target promoter regions. Targets include the ssuDBC operon, the tauABC operon, three tauD-type genes and atsA. The sequence is that of HTH-type transcriptional regulator SsuR from Burkholderia cenocepacia (strain ATCC BAA-245 / DSM 16553 / LMG 16656 / NCTC 13227 / J2315 / CF5610) (Burkholderia cepacia (strain J2315)).